The following is a 767-amino-acid chain: Photosystem I P700 chlorophyll a apoprotein A1 (767 aa).

A run of 8 helical transmembrane segments spans residues 72–95 (IFSA…FHGA), 158–181 (LMAL…FHYH), 197–221 (LNHH…HVSA), 305–323 (IAHH…GHMY), 364–387 (WHAQ…QHMY), 403–429 (IGLF…IAMV), 451–473 (AIIS…LYIH), and 548–566 (FMVH…LILL). The [4Fe-4S] cluster site is built by C590 and C599. 2 consecutive transmembrane segments (helical) span residues 606–627 (HVFL…HFSW) and 681–703 (TAAY…MFLF). H692 provides a ligand contact to chlorophyll a'. The chlorophyll a site is built by M700 and Y708. W709 serves as a coordination point for phylloquinone. The chain crosses the membrane as a helical span at residues 741-761 (AVGVAHYLLGGIATTWAFFHA).

This sequence belongs to the PsaA/PsaB family. In terms of assembly, the PsaA/B heterodimer binds the P700 chlorophyll special pair and subsequent electron acceptors. PSI consists of a core antenna complex that captures photons, and an electron transfer chain that converts photonic excitation into a charge separation. The cyanobacterial PSI reaction center is composed of one copy each of PsaA,B,C,D,E,F,I,J,K,L,M and X, and forms trimeric complexes. It depends on PSI electron transfer chain: 5 chlorophyll a, 1 chlorophyll a', 2 phylloquinones and 3 4Fe-4S clusters. PSI core antenna: 90 chlorophyll a, 22 carotenoids, 3 phospholipids and 1 galactolipid. P700 is a chlorophyll a/chlorophyll a' dimer, A0 is one or more chlorophyll a, A1 is one or both phylloquinones and FX is a shared 4Fe-4S iron-sulfur center. as a cofactor.

It localises to the cellular thylakoid membrane. The enzyme catalyses reduced [plastocyanin] + hnu + oxidized [2Fe-2S]-[ferredoxin] = oxidized [plastocyanin] + reduced [2Fe-2S]-[ferredoxin]. Its function is as follows. PsaA and PsaB bind P700, the primary electron donor of photosystem I (PSI), as well as the electron acceptors A0, A1 and FX. PSI is a plastocyanin/cytochrome c6-ferredoxin oxidoreductase, converting photonic excitation into a charge separation, which transfers an electron from the donor P700 chlorophyll pair to the spectroscopically characterized acceptors A0, A1, FX, FA and FB in turn. Oxidized P700 is reduced on the lumenal side of the thylakoid membrane by plastocyanin or cytochrome c6. The protein is Photosystem I P700 chlorophyll a apoprotein A1 of Synechococcus sp. (strain CC9605).